Reading from the N-terminus, the 406-residue chain is Pyruvate dehydrogenase E1 component subunit beta-3, chloroplastic (406 aa).

The N-terminal 70 residues, 1-70 (MSAILQGAGA…PLIPNAVTTK (70 aa)), are a transit peptide targeting the chloroplast. Position 142 (Glu142) interacts with thiamine diphosphate. 4 residues coordinate K(+): Val195, Ala243, Ile244, and Asn248.

In terms of assembly, tetramer of 2 alpha and 2 beta subunits. Thiamine diphosphate serves as cofactor.

Its subcellular location is the plastid. It is found in the chloroplast. The catalysed reaction is N(6)-[(R)-lipoyl]-L-lysyl-[protein] + pyruvate + H(+) = N(6)-[(R)-S(8)-acetyldihydrolipoyl]-L-lysyl-[protein] + CO2. Functionally, the pyruvate dehydrogenase complex catalyzes the overall conversion of pyruvate to acetyl-CoA and CO(2). It contains multiple copies of three enzymatic components: pyruvate dehydrogenase (E1), dihydrolipoamide acetyltransferase (E2) and lipoamide dehydrogenase (E3). The protein is Pyruvate dehydrogenase E1 component subunit beta-3, chloroplastic (E1-BETA-2) of Arabidopsis thaliana (Mouse-ear cress).